We begin with the raw amino-acid sequence, 1023 residues long: RTX-I toxin determinant A from serotypes 5/10 (1023 aa).

The next 3 membrane-spanning stretches (helical) occupy residues 226-256, 297-326, and 367-406; these read NNLP…ILSN, STTA…ADKF, and INSV…SGIL. 6 Hemolysin-type calcium-binding repeats span residues 730 to 747, 748 to 765, 766 to 783, 784 to 801, 812 to 829, and 830 to 847; these read FGSR…DDEI, YGND…NDVI, HGGD…NDRL, IGGK…DDEL, LGGA…TNLF, and DGGV…KDIY.

Belongs to the RTX prokaryotic toxin (TC 1.C.11) family. In terms of processing, palmitoylated by ApxIC. The toxin only becomes active when modified.

It localises to the secreted. The protein localises to the host cell membrane. Its function is as follows. One of the virulence factors of A.pleuropneumoniae, which has a strong hemolytic activity and is cytotoxic for alveolar macrophages and neutrophils. The polypeptide is RTX-I toxin determinant A from serotypes 5/10 (apxIA) (Actinobacillus pleuropneumoniae (Haemophilus pleuropneumoniae)).